The sequence spans 128 residues: MPPKGKGGKGAKGAAASGSGDSDKKEKAQKGGTAVKVRHILCEKHGKCMEAMEKIKSGMRFSEVAAQYSEDKARQGGDLGWMTRGSMVGPFQDAAFALPISTMDKPVYTDPPVKTKFGYHIIMVEGKK.

A disordered region spans residues 1–34; the sequence is MPPKGKGGKGAKGAAASGSGDSDKKEKAQKGGTA. The PpiC domain occupies 32 to 126; it reads GTAVKVRHIL…FGYHIIMVEG (95 aa).

The protein belongs to the PpiC/parvulin rotamase family. PIN4 subfamily.

The protein resides in the nucleus. The protein localises to the nucleolus. Its subcellular location is the cytoplasm. It is found in the cytoskeleton. It localises to the spindle. It carries out the reaction [protein]-peptidylproline (omega=180) = [protein]-peptidylproline (omega=0). In terms of biological role, may be involved as a ribosomal RNA processing factor in ribosome biogenesis. Binds to DNA. In Danio rerio (Zebrafish), this protein is Peptidyl-prolyl cis-trans isomerase NIMA-interacting 4 (pin4).